Consider the following 467-residue polypeptide: MSKVASIVDVLQGKVAIGETVTVRGWVRTRRDSKAGLSFLAVYDGSCFDPIQAIINNDIKNYESEILRLTTGCSVIVTGKVVESPSEGQAVELQAEKVEVTGFVEDPDTYPMAAKRHSIEYLREVAHLRPRTNIIGAVSRVRHCLSQAIHRFFHEQGFYWVATPLITASDTEGAGEMFRVSTLDLENLPRSENGKVDFSQDFFGKESFLTVSGQLNGETYACALSKIYTFGPTFRAENSNTTRHLAEFWMVEPEVAFATLADNAKLAEDMLKYVFRAVLAERKDDLQFFEKHVDKDVITRLENFVNSDFAQIDYTDAIDVLLKSGKKFEFPVSWGIDLSSEHERFLAEEYFKSPVVVKNYPKDIKAFYMRLNDDGKTVAAMDVLAPGIGEIIGGSQREERLEVLDKRMEEMGLNPDDYWWYRDLRKYGSVPHSGFGLGFERLIVYVTGVQNIRDVIPFPRAPRNANF.

It belongs to the class-II aminoacyl-tRNA synthetase family. In terms of assembly, homodimer.

The protein resides in the cytoplasm. It catalyses the reaction tRNA(Asn) + L-asparagine + ATP = L-asparaginyl-tRNA(Asn) + AMP + diphosphate + H(+). This Haemophilus influenzae (strain PittEE) protein is Asparagine--tRNA ligase.